A 209-amino-acid polypeptide reads, in one-letter code: Kynurenine formamidase (209 aa).

Substrate is bound at residue Phe-18. Residues His-48, His-52, and Asp-54 each contribute to the Zn(2+) site. The active-site Proton donor/acceptor is His-58. His-160 and Glu-172 together coordinate Zn(2+).

Belongs to the Cyclase 1 superfamily. KynB family. Homodimer. Zn(2+) serves as cofactor.

It carries out the reaction N-formyl-L-kynurenine + H2O = L-kynurenine + formate + H(+). It participates in amino-acid degradation; L-tryptophan degradation via kynurenine pathway; L-kynurenine from L-tryptophan: step 2/2. Its function is as follows. Catalyzes the hydrolysis of N-formyl-L-kynurenine to L-kynurenine, the second step in the kynurenine pathway of tryptophan degradation. This is Kynurenine formamidase from Bordetella avium (strain 197N).